We begin with the raw amino-acid sequence, 238 residues long: Ribonuclease PH (238 aa).

Phosphate contacts are provided by residues arginine 86 and 124–126 (GTR).

The protein belongs to the RNase PH family. In terms of assembly, homohexameric ring arranged as a trimer of dimers.

The catalysed reaction is tRNA(n+1) + phosphate = tRNA(n) + a ribonucleoside 5'-diphosphate. Functionally, phosphorolytic 3'-5' exoribonuclease that plays an important role in tRNA 3'-end maturation. Removes nucleotide residues following the 3'-CCA terminus of tRNAs; can also add nucleotides to the ends of RNA molecules by using nucleoside diphosphates as substrates, but this may not be physiologically important. Probably plays a role in initiation of 16S rRNA degradation (leading to ribosome degradation) during starvation. This chain is Ribonuclease PH, found in Dichelobacter nodosus (strain VCS1703A).